The primary structure comprises 214 residues: MSQRKARGPPAMPGVGHSQTQAKARLLPGADRKRSRLSRTRQDPWEERSWSNQRWSRATPGPRGTRAGGLALGRSEASPENAARERSRVRTLRQAFLALQAALPAVPPDTKLSKLDVLVLAASYIAHLTRTLGHELPGPAWPPFLRGLRYLHPLKKWPMRSRLYAGGLGYSDLDSTTASTPSQRTRDAEVGSQVPGEADALLSTTPLSPALGDK.

Disordered regions lie at residues 1–86 and 174–214; these read MSQR…ARER and DSTT…LGDK. Positions 40–49 are enriched in basic and acidic residues; it reads TRQDPWEERS. Residues 76–128 form the bHLH domain; the sequence is EASPENAARERSRVRTLRQAFLALQAALPAVPPDTKLSKLDVLVLAASYIAHL. A compositionally biased stretch (polar residues) spans 174 to 183; sequence DSTTASTPSQ.

Forms inactive heterodimeric complexes with TCF3. As to expression, expressed in liver, kidney and spleen.

The protein resides in the nucleus. In terms of biological role, inhibits E-box-mediated binding and transactivation of bHLH factors. Inhibitory effect is similar to that of ID proteins. Inhibits the formation of TCF3 and MYOD1 homodimers and heterodimers. Lacks DNA binding activity. Seems to play a role in the inhibition of myogenesis. This chain is Transcription factor 23 (TCF23), found in Homo sapiens (Human).